A 413-amino-acid chain; its full sequence is MISRHFTVLTALNLQTKIKICIRNFSIRGAMTKVNGNSNGNGISASTDLLDTPSAYTQKSNKTHTSIDLRSDTVTVPSVEMRRAMAEAIVGDDVYGEDTTTNRLEQRCAELFGKEAGLFVTSGTMGNLLAIMAHCQRGEEIIVGRYNHIHRWEQGNYAQFAGISATTLEVKPDGTMDLNDIEQAIRVKDCHMPASKLICIENTHNYTGGKALPIEWMRSVKQLAERRDLKVHMDGARIYNAAVASNCSVSKIASFADTVQMCFSKGLGAPVGSIVVGPKDFIDRARHSRKALGGGWRQSGILAAAAHIALDHADATIRADHERAKTLARMINDATPEEFRTKVFAAEKDITNMVLVHCQNGVTVQQLTDFFQKHDILAMTFDARRIRMVLNWNVSDENLETIVEVYKKFLKQL.

N6-(pyridoxal phosphate)lysine is present on K265.

This sequence belongs to the threonine aldolase family. Requires pyridoxal 5'-phosphate as cofactor.

This is an uncharacterized protein from Caenorhabditis elegans.